We begin with the raw amino-acid sequence, 660 residues long: Bifunctional polymyxin resistance protein ArnA (660 aa).

The interval 1–304 (MKAVIFAYHD…TLGLVAGARL (304 aa)) is formyltransferase ArnAFT. Histidine 104 acts as the Proton donor; for formyltransferase activity in catalysis. (6R)-10-formyltetrahydrofolate contacts are provided by residues arginine 114 and 136–140 (VKRAD). The dehydrogenase ArnADH stretch occupies residues 314 to 660 (RRIRVLILGV…RSVDVAERAS (347 aa)). Residues aspartate 347 and 368–369 (DI) contribute to the NAD(+) site. UDP-alpha-D-glucuronate contacts are provided by residues alanine 393, tyrosine 398, and 432-433 (TS). The active-site Proton acceptor; for decarboxylase activity is glutamate 434. Residues arginine 460, asparagine 492, 526–535 (KLIDGGQQKR), and tyrosine 613 contribute to the UDP-alpha-D-glucuronate site. The active-site Proton donor; for decarboxylase activity is the arginine 619.

The protein in the N-terminal section; belongs to the Fmt family. UDP-L-Ara4N formyltransferase subfamily. In the C-terminal section; belongs to the NAD(P)-dependent epimerase/dehydratase family. UDP-glucuronic acid decarboxylase subfamily. As to quaternary structure, homohexamer, formed by a dimer of trimers.

It catalyses the reaction UDP-alpha-D-glucuronate + NAD(+) = UDP-beta-L-threo-pentopyranos-4-ulose + CO2 + NADH. The catalysed reaction is UDP-4-amino-4-deoxy-beta-L-arabinose + (6R)-10-formyltetrahydrofolate = UDP-4-deoxy-4-formamido-beta-L-arabinose + (6S)-5,6,7,8-tetrahydrofolate + H(+). It participates in nucleotide-sugar biosynthesis; UDP-4-deoxy-4-formamido-beta-L-arabinose biosynthesis; UDP-4-deoxy-4-formamido-beta-L-arabinose from UDP-alpha-D-glucuronate: step 1/3. Its pathway is nucleotide-sugar biosynthesis; UDP-4-deoxy-4-formamido-beta-L-arabinose biosynthesis; UDP-4-deoxy-4-formamido-beta-L-arabinose from UDP-alpha-D-glucuronate: step 3/3. It functions in the pathway bacterial outer membrane biogenesis; lipopolysaccharide biosynthesis. Functionally, bifunctional enzyme that catalyzes the oxidative decarboxylation of UDP-glucuronic acid (UDP-GlcUA) to UDP-4-keto-arabinose (UDP-Ara4O) and the addition of a formyl group to UDP-4-amino-4-deoxy-L-arabinose (UDP-L-Ara4N) to form UDP-L-4-formamido-arabinose (UDP-L-Ara4FN). The modified arabinose is attached to lipid A and is required for resistance to polymyxin and cationic antimicrobial peptides. The polypeptide is Bifunctional polymyxin resistance protein ArnA (Salmonella enteritidis PT4 (strain P125109)).